A 206-amino-acid chain; its full sequence is MKGGKRVQTARPNRINGEIRAQEVRLTGLEGEQLGIVSLREALEKAEEAGVDLVEISPNAEPMSLREALEKAEEAGVDLVEISPNAEPPVCRIMDYGKFLYEKSKSSKEQKKKQKVIQVKEIKFRPSTDEGDYQVKLRSLIRFLEEGDKAKITLRFRGREMAHQQIGMEVLNRVKDDLQELAVVESFPTKIEGRQMIMVLAPKKKQ.

This sequence belongs to the IF-3 family. In terms of assembly, monomer.

Its subcellular location is the cytoplasm. Functionally, IF-3 binds to the 30S ribosomal subunit and shifts the equilibrium between 70S ribosomes and their 50S and 30S subunits in favor of the free subunits, thus enhancing the availability of 30S subunits on which protein synthesis initiation begins. The polypeptide is Translation initiation factor IF-3 (Shigella flexneri).